We begin with the raw amino-acid sequence, 475 residues long: Bifunctional protein HldE (475 aa).

Residues 1-321 (MADKIDISLY…RALHQITASH (321 aa)) form a ribokinase region. Residue 197 to 200 (NLKE) participates in ATP binding. Aspartate 266 is a catalytic residue. Residues 346-475 (MTNGCFDILH…TSRLVEKMLN (130 aa)) are cytidylyltransferase.

In the N-terminal section; belongs to the carbohydrate kinase PfkB family. This sequence in the C-terminal section; belongs to the cytidylyltransferase family. In terms of assembly, homodimer.

It catalyses the reaction D-glycero-beta-D-manno-heptose 7-phosphate + ATP = D-glycero-beta-D-manno-heptose 1,7-bisphosphate + ADP + H(+). The catalysed reaction is D-glycero-beta-D-manno-heptose 1-phosphate + ATP + H(+) = ADP-D-glycero-beta-D-manno-heptose + diphosphate. Its pathway is nucleotide-sugar biosynthesis; ADP-L-glycero-beta-D-manno-heptose biosynthesis; ADP-L-glycero-beta-D-manno-heptose from D-glycero-beta-D-manno-heptose 7-phosphate: step 1/4. It functions in the pathway nucleotide-sugar biosynthesis; ADP-L-glycero-beta-D-manno-heptose biosynthesis; ADP-L-glycero-beta-D-manno-heptose from D-glycero-beta-D-manno-heptose 7-phosphate: step 3/4. Its function is as follows. Catalyzes the phosphorylation of D-glycero-D-manno-heptose 7-phosphate at the C-1 position to selectively form D-glycero-beta-D-manno-heptose-1,7-bisphosphate. Catalyzes the ADP transfer from ATP to D-glycero-beta-D-manno-heptose 1-phosphate, yielding ADP-D-glycero-beta-D-manno-heptose. In Coxiella burnetii (strain Dugway 5J108-111), this protein is Bifunctional protein HldE.